A 657-amino-acid chain; its full sequence is MACVLACVAVLIGAASATASIDFTPIDDGAGLVFERIGALRHVTNQRFLFVQTIDYYPLLQELAKISKFVREPRNNASSCPLVKLVRPGKPRATGGRISKHLASLTQINKEFVSYTLNSADPQNNEVFTDVLEVDYEDTRQQDAAFADAHNPPHWSVVSAADVKELLAVAPPRDRVRVLPHISTANVADKYLKYEACINEERSADNECLYLTEMHGVMASKLADAASFANTLDRLIKQTRRNKLNMTNNVIDDELLLREMRQLSKLLAGHGLGWVVDFERELNAQFDLSQAYKLHLYASQNTVVLCVAMPLVDTAALQYSLYKVATVPFCRGTMCLMMVPAADYIAVTDTRNFYTQVPADFQTQCKAFAGYDEFLCPASQRVPTLDSGECEIEMFMGRYARDIDVQCDMRVADNRPSQVLLGPLVNCRKWVYSFSSNATVSYWCGARDAATVAVPAGVGVVVAQSPLTCSVRVNKDALLFTVDTRSHKAASRAYWPRRRFNYNDYVNTSLLLQTTTSFADTVTDLSAQQLKTLRSRFHIRDYATPRHTFFAPRRSDAAAPDPPHEKPTMLVYVLLGVGVLSALCVVGAYCAFRRYCKQRRSSVVVSFKNDDSQPMVAISNGARAGVHINVPHNNSAPKYEKAFLFPMEIKRTNNKLA.

Positions 1–17 are cleaved as a signal peptide; sequence MACVLACVAVLIGAASA.

This is an uncharacterized protein from Orgyia pseudotsugata (Douglas-fir tussock moth).